Consider the following 722-residue polypeptide: Ras and EF-hand domain-containing protein (722 aa).

EF-hand domains follow at residues 5–39 and 39–74; these read DELSRLRALFHTFDSKSSGRLEKGQFSALCAELKV and VSPSEAEDIFARLDSDKDSCITFEDFAMGFRGARGL. A compositionally biased stretch (basic and acidic residues) spans 75-84; it reads HMPEGKKDVE. A disordered region spans residues 75-109; it reads HMPEGKKDVEQGEPPKSPSTPDKEEKPEETSSPAW. Residues 156–335 adopt a coiled-coil conformation; that stretch reads REIRLQSTEM…ANRKLHDSND (180 aa). Positions 355-374 are enriched in polar residues; sequence INTSPGSTISRNSPKLTRCT. 2 disordered regions span residues 355–384 and 439–491; these read INTSPGSTISRNSPKLTRCTSPYDRSPRSS and FHRS…SGAS. Over residues 480-491 the composition is skewed to low complexity; it reads SNPVSRSSSGAS. GTP is bound by residues 532-537, 635-638, and 672-673; these read AVGKSS, NKAD, and AK.

Belongs to the small GTPase superfamily. Rab family. As to quaternary structure, homodimer.

It localises to the cytoplasm. The protein resides in the perinuclear region. Binds predominantly GDP, and also GTP. This is Ras and EF-hand domain-containing protein (rasef) from Xenopus tropicalis (Western clawed frog).